Consider the following 396-residue polypeptide: Argininosuccinate synthase (396 aa).

An ATP-binding site is contributed by 9 to 17 (AYSGGLDTS). Tyr85 contacts L-citrulline. Gly115 lines the ATP pocket. Residues Thr117, Asn121, and Asp122 each coordinate L-aspartate. Residue Asn121 participates in L-citrulline binding. The L-citrulline site is built by Arg125, Ser173, Glu258, and Tyr270.

Belongs to the argininosuccinate synthase family. Type 1 subfamily. As to quaternary structure, homotetramer.

The protein localises to the cytoplasm. It carries out the reaction L-citrulline + L-aspartate + ATP = 2-(N(omega)-L-arginino)succinate + AMP + diphosphate + H(+). It participates in amino-acid biosynthesis; L-arginine biosynthesis; L-arginine from L-ornithine and carbamoyl phosphate: step 2/3. This is Argininosuccinate synthase from Streptococcus agalactiae serotype III (strain NEM316).